Reading from the N-terminus, the 83-residue chain is Cytochrome c oxidase subunit 7A2, mitochondrial (83 aa).

The transit peptide at 1–23 (MLRNLLALRQIAKRTISTSSRRQ) directs the protein to the mitochondrion. Over 24–48 (FENKVPEKQKLFQEDNGIPVHLKGG) the chain is Mitochondrial matrix. Lysine 33 bears the N6-acetyllysine mark. Residues 49–77 (IADALLYRATLILTVGGTAYAMYELAVAS) form a helical membrane-spanning segment. Residues 78-83 (FPKKQD) lie on the Mitochondrial intermembrane side of the membrane.

It belongs to the cytochrome c oxidase VIIa family. As to quaternary structure, component of the cytochrome c oxidase (complex IV, CIV), a multisubunit enzyme composed of 14 subunits. The complex is composed of a catalytic core of 3 subunits MT-CO1, MT-CO2 and MT-CO3, encoded in the mitochondrial DNA, and 11 supernumerary subunits COX4I1 (or COX4I2), COX5A, COX5B, COX6A2 (or COX6A1), COX6B1 (or COX6B2), COX6C, COX7A1 (or COX7A2), COX7B, COX7C, COX8B and NDUFA4, which are encoded in the nuclear genome. The complex exists as a monomer or a dimer and forms supercomplexes (SCs) in the inner mitochondrial membrane with NADH-ubiquinone oxidoreductase (complex I, CI) and ubiquinol-cytochrome c oxidoreductase (cytochrome b-c1 complex, complex III, CIII), resulting in different assemblies (supercomplex SCI(1)III(2)IV(1) and megacomplex MCI(2)III(2)IV(2)). Interacts with PET100.

The protein resides in the mitochondrion inner membrane. It functions in the pathway energy metabolism; oxidative phosphorylation. Its function is as follows. Component of the cytochrome c oxidase, the last enzyme in the mitochondrial electron transport chain which drives oxidative phosphorylation. The respiratory chain contains 3 multisubunit complexes succinate dehydrogenase (complex II, CII), ubiquinol-cytochrome c oxidoreductase (cytochrome b-c1 complex, complex III, CIII) and cytochrome c oxidase (complex IV, CIV), that cooperate to transfer electrons derived from NADH and succinate to molecular oxygen, creating an electrochemical gradient over the inner membrane that drives transmembrane transport and the ATP synthase. Cytochrome c oxidase is the component of the respiratory chain that catalyzes the reduction of oxygen to water. Electrons originating from reduced cytochrome c in the intermembrane space (IMS) are transferred via the dinuclear copper A center (CU(A)) of subunit 2 and heme A of subunit 1 to the active site in subunit 1, a binuclear center (BNC) formed by heme A3 and copper B (CU(B)). The BNC reduces molecular oxygen to 2 water molecules using 4 electrons from cytochrome c in the IMS and 4 protons from the mitochondrial matrix. This is Cytochrome c oxidase subunit 7A2, mitochondrial (COX7A2) from Bos taurus (Bovine).